A 323-amino-acid chain; its full sequence is tRNA-dihydrouridine(16) synthase (323 aa).

FMN contacts are provided by residues 7 to 9 and Gln-68; that span reads PME. The active-site Proton donor is the Cys-98. Residues Lys-139, 200-202, and 224-225 each bind FMN; these read NGE and CR.

This sequence belongs to the Dus family. DusC subfamily. FMN is required as a cofactor.

It catalyses the reaction 5,6-dihydrouridine(16) in tRNA + NADP(+) = uridine(16) in tRNA + NADPH + H(+). The catalysed reaction is 5,6-dihydrouridine(16) in tRNA + NAD(+) = uridine(16) in tRNA + NADH + H(+). In terms of biological role, catalyzes the synthesis of 5,6-dihydrouridine (D), a modified base found in the D-loop of most tRNAs, via the reduction of the C5-C6 double bond in target uridines. Specifically modifies U16 in tRNAs. This chain is tRNA-dihydrouridine(16) synthase, found in Vibrio cholerae serotype O1 (strain ATCC 39315 / El Tor Inaba N16961).